Consider the following 100-residue polypeptide: uncharacterized protein (100 aa).

The next 3 membrane-spanning stretches (helical) occupy residues 11-33 (VWSILFVTGIVTACLFAGVSVLM), 45-64 (WMLAGLIVLGVFAIWYSLVY), and 68-90 (WEGAALGMLGFNVIFGAIAGYLI).

Its subcellular location is the cell membrane. This is an uncharacterized protein from Bacillus subtilis (strain 168).